The chain runs to 529 residues: Bifunctional purine biosynthesis protein PurH (529 aa).

In terms of domain architecture, MGS-like spans 3 to 149 (DRIPLKRALI…KNHAFVTVVV (147 aa)).

This sequence belongs to the PurH family.

It catalyses the reaction (6R)-10-formyltetrahydrofolate + 5-amino-1-(5-phospho-beta-D-ribosyl)imidazole-4-carboxamide = 5-formamido-1-(5-phospho-D-ribosyl)imidazole-4-carboxamide + (6S)-5,6,7,8-tetrahydrofolate. It carries out the reaction IMP + H2O = 5-formamido-1-(5-phospho-D-ribosyl)imidazole-4-carboxamide. Its pathway is purine metabolism; IMP biosynthesis via de novo pathway; 5-formamido-1-(5-phospho-D-ribosyl)imidazole-4-carboxamide from 5-amino-1-(5-phospho-D-ribosyl)imidazole-4-carboxamide (10-formyl THF route): step 1/1. It participates in purine metabolism; IMP biosynthesis via de novo pathway; IMP from 5-formamido-1-(5-phospho-D-ribosyl)imidazole-4-carboxamide: step 1/1. The polypeptide is Bifunctional purine biosynthesis protein PurH (Paracoccus denitrificans (strain Pd 1222)).